Here is a 208-residue protein sequence, read N- to C-terminus: Large ribosomal subunit protein bL25 (208 aa).

The protein belongs to the bacterial ribosomal protein bL25 family. CTC subfamily. As to quaternary structure, part of the 50S ribosomal subunit; part of the 5S rRNA/L5/L18/L25 subcomplex. Contacts the 5S rRNA. Binds to the 5S rRNA independently of L5 and L18.

In terms of biological role, this is one of the proteins that binds to the 5S RNA in the ribosome where it forms part of the central protuberance. The chain is Large ribosomal subunit protein bL25 from Paracoccus denitrificans (strain Pd 1222).